A 512-amino-acid chain; its full sequence is NADH-quinone oxidoreductase subunit N (512 aa).

14 consecutive transmembrane segments (helical) span residues 32-52 (VLPA…SVLF), 57-77 (FIIV…AVFY), 97-117 (VLSF…AAIV), 126-146 (IEFP…TLMT), 151-171 (FILV…LIGM), 186-206 (FLLG…LFGG), 231-251 (IGLV…PYHA), 264-284 (VTGY…LILY), 296-316 (WAWL…LLAL), 324-344 (MLAY…SAGI), 348-368 (VLFY…ILAY), 392-412 (AIAI…GGFW), 431-451 (ILLI…LRIG), and 473-493 (VGVT…WFLL).

This sequence belongs to the complex I subunit 2 family. In terms of assembly, NDH-1 is composed of 14 different subunits. Subunits NuoA, H, J, K, L, M, N constitute the membrane sector of the complex.

The protein resides in the cell inner membrane. The catalysed reaction is a quinone + NADH + 5 H(+)(in) = a quinol + NAD(+) + 4 H(+)(out). Functionally, NDH-1 shuttles electrons from NADH, via FMN and iron-sulfur (Fe-S) centers, to quinones in the respiratory chain. The immediate electron acceptor for the enzyme in this species is believed to be ubiquinone. Couples the redox reaction to proton translocation (for every two electrons transferred, four hydrogen ions are translocated across the cytoplasmic membrane), and thus conserves the redox energy in a proton gradient. The polypeptide is NADH-quinone oxidoreductase subunit N (Leptospira interrogans serogroup Icterohaemorrhagiae serovar Lai (strain 56601)).